The primary structure comprises 472 residues: MTDKPKQYVKEMFFRPQHLHFTGIGGIGMSGIAEVLLNLGYQISGSDVKLSPITERLAAMGARVFEGHAASNIAGARALVVSSAVDEQNPEVQEARRISIPVIPRGELLAELMRLKYGIAVAGSHGKTTTTSMAATILNYAGLDPTVVVGGRVGTMGGSNARVGHSDFLVVESDESDGSFLKLAPIIAVVTNVDREHLDHYPDLDAIRAAFLEFVNKVPFYGAVIVCLDDANVQGLLPEIRRRTITYGTTAQADMEAGDISCGPFASEFRLRYRTADLGRFRLHIPGRHNVLNAMAAIAVAMELEVKPDTIREALETFSGVDRRFQLRGQERGIAVVDDYGHHPTEIRATLDGARQCGFRRIHVLFQPHRYTRTFHLMDEFARSFHQADSLFVMDIYAASEKPIPGVTAESLVERIRQFGHRGVEYVGTLDRGVDALVAAASEGDLVLTLGAGSVYQAGEKVLERLRTEGKG.

ATP is bound at residue 123–129 (GSHGKTT).

Belongs to the MurCDEF family.

The protein resides in the cytoplasm. It catalyses the reaction UDP-N-acetyl-alpha-D-muramate + L-alanine + ATP = UDP-N-acetyl-alpha-D-muramoyl-L-alanine + ADP + phosphate + H(+). It participates in cell wall biogenesis; peptidoglycan biosynthesis. Functionally, cell wall formation. The protein is UDP-N-acetylmuramate--L-alanine ligase of Solibacter usitatus (strain Ellin6076).